Here is a 407-residue protein sequence, read N- to C-terminus: Queuine tRNA-ribosyltransferase-like protein (407 aa).

This sequence belongs to the queuine tRNA-ribosyltransferase family.

The chain is Queuine tRNA-ribosyltransferase-like protein from Plasmodium falciparum (isolate 3D7).